The sequence spans 461 residues: Kynureninase (461 aa).

Pyridoxal 5'-phosphate-binding positions include leucine 114, threonine 115, 142–145, aspartate 228, histidine 231, and tyrosine 253; that span reads FPSD. At lysine 254 the chain carries N6-(pyridoxal phosphate)lysine. Residues tryptophan 288 and asparagine 316 each coordinate pyridoxal 5'-phosphate.

This sequence belongs to the kynureninase family. As to quaternary structure, homodimer. Pyridoxal 5'-phosphate is required as a cofactor.

It localises to the cytoplasm. It catalyses the reaction L-kynurenine + H2O = anthranilate + L-alanine + H(+). It carries out the reaction 3-hydroxy-L-kynurenine + H2O = 3-hydroxyanthranilate + L-alanine + H(+). It functions in the pathway amino-acid degradation; L-kynurenine degradation; L-alanine and anthranilate from L-kynurenine: step 1/1. Its pathway is cofactor biosynthesis; NAD(+) biosynthesis; quinolinate from L-kynurenine: step 2/3. Catalyzes the cleavage of L-kynurenine (L-Kyn) and L-3-hydroxykynurenine (L-3OHKyn) into anthranilic acid (AA) and 3-hydroxyanthranilic acid (3-OHAA), respectively. The polypeptide is Kynureninase (Lodderomyces elongisporus (strain ATCC 11503 / CBS 2605 / JCM 1781 / NBRC 1676 / NRRL YB-4239) (Yeast)).